Reading from the N-terminus, the 608-residue chain is Isocitrate dehydrogenase kinase/phosphatase (608 aa).

ATP is bound by residues 327-333 and K348; that span reads APGIKGL. Residue D383 is part of the active site. The interval 589–608 is disordered; the sequence is FDSTPDAGDGDSAGDAQRAA.

This sequence belongs to the AceK family.

The protein resides in the cytoplasm. It catalyses the reaction L-seryl-[isocitrate dehydrogenase] + ATP = O-phospho-L-seryl-[isocitrate dehydrogenase] + ADP + H(+). Its function is as follows. Bifunctional enzyme which can phosphorylate or dephosphorylate isocitrate dehydrogenase (IDH) on a specific serine residue. This is a regulatory mechanism which enables bacteria to bypass the Krebs cycle via the glyoxylate shunt in response to the source of carbon. When bacteria are grown on glucose, IDH is fully active and unphosphorylated, but when grown on acetate or ethanol, the activity of IDH declines drastically concomitant with its phosphorylation. In Burkholderia ambifaria (strain MC40-6), this protein is Isocitrate dehydrogenase kinase/phosphatase.